Reading from the N-terminus, the 351-residue chain is Hydroxymethylglutaryl-CoA synthase (351 aa).

Aspartate 28 provides a ligand contact to (3S)-3-hydroxy-3-methylglutaryl-CoA. The Proton donor/acceptor role is filled by glutamate 80. Residues cysteine 112 and threonine 153 each coordinate (3S)-3-hydroxy-3-methylglutaryl-CoA. Cysteine 112 acts as the Acyl-thioester intermediate in catalysis. Residue arginine 199 coordinates CoA. (3S)-3-hydroxy-3-methylglutaryl-CoA contacts are provided by threonine 201 and histidine 234. Histidine 234 functions as the Proton donor/acceptor in the catalytic mechanism. Lysine 239 contacts CoA. (3S)-3-hydroxy-3-methylglutaryl-CoA contacts are provided by arginine 243, asparagine 266, and serine 296.

The protein belongs to the thiolase-like superfamily. Archaeal HMG-CoA synthase family. As to quaternary structure, interacts with acetoacetyl-CoA thiolase that catalyzes the precedent step in the pathway and with a DUF35 protein. The acetoacetyl-CoA thiolase/HMG-CoA synthase complex channels the intermediate via a fused CoA-binding site, which allows for efficient coupling of the endergonic thiolase reaction with the exergonic HMGCS reaction.

It carries out the reaction acetoacetyl-CoA + acetyl-CoA + H2O = (3S)-3-hydroxy-3-methylglutaryl-CoA + CoA + H(+). The protein operates within metabolic intermediate biosynthesis; (R)-mevalonate biosynthesis; (R)-mevalonate from acetyl-CoA: step 2/3. Functionally, catalyzes the condensation of acetyl-CoA with acetoacetyl-CoA to form 3-hydroxy-3-methylglutaryl-CoA (HMG-CoA). Functions in the mevalonate (MVA) pathway leading to isopentenyl diphosphate (IPP), a key precursor for the biosynthesis of isoprenoid compounds that are building blocks of archaeal membrane lipids. The polypeptide is Hydroxymethylglutaryl-CoA synthase (Picrophilus torridus (strain ATCC 700027 / DSM 9790 / JCM 10055 / NBRC 100828 / KAW 2/3)).